Consider the following 338-residue polypeptide: Methionyl-tRNA formyltransferase (338 aa).

Residue 110 to 113 participates in (6S)-5,6,7,8-tetrahydrofolate binding; sequence SLLP.

This sequence belongs to the Fmt family.

The enzyme catalyses L-methionyl-tRNA(fMet) + (6R)-10-formyltetrahydrofolate = N-formyl-L-methionyl-tRNA(fMet) + (6S)-5,6,7,8-tetrahydrofolate + H(+). Functionally, attaches a formyl group to the free amino group of methionyl-tRNA(fMet). The formyl group appears to play a dual role in the initiator identity of N-formylmethionyl-tRNA by promoting its recognition by IF2 and preventing the misappropriation of this tRNA by the elongation apparatus. This is Methionyl-tRNA formyltransferase from Synechococcus sp. (strain CC9902).